A 140-amino-acid polypeptide reads, in one-letter code: Small ribosomal subunit protein uS19 (140 aa).

Positions 55–74 (LAEARESGTEETANNPIRTH) are disordered.

Belongs to the universal ribosomal protein uS19 family.

Functionally, protein S19 forms a complex with S13 that binds strongly to the 16S ribosomal RNA. The sequence is that of Small ribosomal subunit protein uS19 from Halobacterium salinarum (strain ATCC 29341 / DSM 671 / R1).